The sequence spans 125 residues: Small ribosomal subunit protein uS12 (125 aa).

At Asp-89 the chain carries 3-methylthioaspartic acid.

This sequence belongs to the universal ribosomal protein uS12 family. In terms of assembly, part of the 30S ribosomal subunit. Contacts proteins S8 and S17. May interact with IF1 in the 30S initiation complex.

Its function is as follows. With S4 and S5 plays an important role in translational accuracy. In terms of biological role, interacts with and stabilizes bases of the 16S rRNA that are involved in tRNA selection in the A site and with the mRNA backbone. Located at the interface of the 30S and 50S subunits, it traverses the body of the 30S subunit contacting proteins on the other side and probably holding the rRNA structure together. The combined cluster of proteins S8, S12 and S17 appears to hold together the shoulder and platform of the 30S subunit. The sequence is that of Small ribosomal subunit protein uS12 from Clostridium botulinum (strain ATCC 19397 / Type A).